We begin with the raw amino-acid sequence, 150 residues long: uncharacterized protein (150 aa).

The next 3 membrane-spanning stretches (helical) occupy residues 48 to 68 (LFLLLFVIPTITLTTLGCFLF), 89 to 109 (VFIFIDVFGLVVSVLFGYLLP), and 123 to 143 (REVFLSLAMIVIFANSVIFTL).

The protein to M.pneumoniae MPN_085 central region.

The protein resides in the cell membrane. This is an uncharacterized protein from Mycoplasma pneumoniae (strain ATCC 29342 / M129 / Subtype 1) (Mycoplasmoides pneumoniae).